Here is a 436-residue protein sequence, read N- to C-terminus: [Pyruvate dehydrogenase (acetyl-transferring)] kinase isozyme 1, mitochondrial (436 aa).

Residues 1–28 constitute a mitochondrion transit peptide; that stretch reads MRLARLLRGAALAGPGPGLRAAGFSRSF. Tyr136 bears the Phosphotyrosine; by FGFR1 mark. A Histidine kinase domain is found at 163–393; sequence YKESFGVDPV…DAVIYIKALS (231 aa). Tyr243 carries the post-translational modification Phosphotyrosine; by FGFR1, ABL1, FLT3 and JAK2. At Tyr244 the chain carries Phosphotyrosine; by FGFR1. Residues 279–286, Asp318, 337–338, and 354–359 contribute to the ATP site; these read ELFKNAMR, ST, and GFGYGL. Thr338 is modified (phosphothreonine). Lys405 bears the N6-succinyllysine mark.

It belongs to the PDK/BCKDK protein kinase family. In terms of assembly, homodimer, and heterodimer with PDK2. Interacts with the pyruvate dehydrogenase complex subunit DLAT, and is part of the multimeric pyruvate dehydrogenase complex that contains multiple copies of pyruvate dehydrogenase (E1), dihydrolipoamide acetyltransferase (DLAT, E2) and lipoamide dehydrogenase (DLD, E3). Interacts with phosphoglycerate kinase PGK1; the interaction is direct, occurs under hypoxic conditions and leads to PDK1-mediated inhibition of pyruvate dehydrogenase complex activity. In terms of processing, phosphorylated by constitutively activated ABL1, FGFR1, FLT3 and JAK2 (in vitro), and this may also occur in cancer cells that express constitutively activated ABL1, FGFR1, FLT3 and JAK2. Phosphorylation at Tyr-243 and Tyr-244 strongly increases kinase activity, while phosphorylation at Tyr-136 has a lesser effect. Phosphorylated under hypoxic conditions at Thr-338 by phosphoglycerate kinase PGK1 which has an activating effect. As to expression, expressed predominantly in the heart. Detected at lower levels in liver, skeletal muscle and pancreas.

It is found in the mitochondrion matrix. It catalyses the reaction L-seryl-[pyruvate dehydrogenase E1 alpha subunit] + ATP = O-phospho-L-seryl-[pyruvate dehydrogenase E1 alpha subunit] + ADP + H(+). Activity is enhanced by binding to the pyruvate dehydrogenase subunit DLAT. Inhibited by AZD7545; this compound interferes with DLAT binding and thereby inhibits kinase activity. Inhibited by dichloroacetate and radicicol. Activated under hypoxic conditions by phosphoglycerate kinase PGK1-mediated phosphorylation at Thr-338. Kinase that plays a key role in regulation of glucose and fatty acid metabolism and homeostasis via phosphorylation of the pyruvate dehydrogenase subunits PDHA1 and PDHA2. This inhibits pyruvate dehydrogenase activity, and thereby regulates metabolite flux through the tricarboxylic acid cycle, down-regulates aerobic respiration and inhibits the formation of acetyl-coenzyme A from pyruvate. Plays an important role in cellular responses to hypoxia and is important for cell proliferation under hypoxia. The sequence is that of [Pyruvate dehydrogenase (acetyl-transferring)] kinase isozyme 1, mitochondrial (PDK1) from Homo sapiens (Human).